The chain runs to 314 residues: Malate dehydrogenase (314 aa).

NAD(+) contacts are provided by residues 7–12 (GAGNVG) and aspartate 32. Substrate contacts are provided by arginine 81 and arginine 87. Residues asparagine 94 and 117–119 (VAN) contribute to the NAD(+) site. Substrate-binding residues include asparagine 119 and arginine 150. Residue histidine 174 is the Proton acceptor of the active site.

This sequence belongs to the LDH/MDH superfamily. MDH type 3 family.

The catalysed reaction is (S)-malate + NAD(+) = oxaloacetate + NADH + H(+). Its function is as follows. Catalyzes the reversible oxidation of malate to oxaloacetate. In Salinibacter ruber (strain DSM 13855 / M31), this protein is Malate dehydrogenase.